The primary structure comprises 160 residues: 2-C-methyl-D-erythritol 2,4-cyclodiphosphate synthase (160 aa).

Positions 8 and 10 each coordinate a divalent metal cation. 4-CDP-2-C-methyl-D-erythritol 2-phosphate-binding positions include 8 to 10 and 34 to 35; these read DVH and HS. An a divalent metal cation-binding site is contributed by His-42. 4-CDP-2-C-methyl-D-erythritol 2-phosphate-binding positions include 56-58, 61-65, 100-106, 132-135, Phe-139, and Arg-142; these read DIG, FPDTD, AQAPKML, and TTTE.

The protein belongs to the IspF family. As to quaternary structure, homotrimer. Requires a divalent metal cation as cofactor.

The catalysed reaction is 4-CDP-2-C-methyl-D-erythritol 2-phosphate = 2-C-methyl-D-erythritol 2,4-cyclic diphosphate + CMP. It participates in isoprenoid biosynthesis; isopentenyl diphosphate biosynthesis via DXP pathway; isopentenyl diphosphate from 1-deoxy-D-xylulose 5-phosphate: step 4/6. Functionally, involved in the biosynthesis of isopentenyl diphosphate (IPP) and dimethylallyl diphosphate (DMAPP), two major building blocks of isoprenoid compounds. Catalyzes the conversion of 4-diphosphocytidyl-2-C-methyl-D-erythritol 2-phosphate (CDP-ME2P) to 2-C-methyl-D-erythritol 2,4-cyclodiphosphate (ME-CPP) with a corresponding release of cytidine 5-monophosphate (CMP). This is 2-C-methyl-D-erythritol 2,4-cyclodiphosphate synthase from Proteus mirabilis (strain HI4320).